Here is a 518-residue protein sequence, read N- to C-terminus: MIPDVSQALAWLEKHPQALKGIQRGLERETLRVNADGTLATTGHPEALGSALTHKWITTDFAEALLEFITPVDGDIQHMLTFMRDLHRYTARKLGDERMWPLSMPCYIAEGQDIELAQYGTSNTGRFKTLYREGLKNRYGALMQTISGVHYNFSLPMAFWQAKCGVTEGEAAKEKISAGYFRLIRNYYRFGWVIPYLFGASPAICSSFLQGKPTTLPFEKTDCGMYYLPYATSLRLSDLGYTNKSQSNLGITFNDLHEYVAGLKRAIKTPSEEYARIGVEKDGKRLQINSNVLQIENELYAPIRPKRVTRSGESPSDALLRGGIEYIEVRSLDINPFSPIGVDEQQVRFLDLFMVWCVLADAPEMSSDELLCTRTNWSRVILEGRKPGLTLGIGCETAQFPLPKVGKDLFRDLKRVAQTLDSIHGGEEYQKVCDELVACFDNPELTFSARILRSMIDEGIGGTGKAFGEAYRNLLREEPLEILQEEEFIAERDASVRRQQEIEAADTEPFAAWLAKHA.

Belongs to the glutamate--cysteine ligase type 1 family. Type 1 subfamily.

The catalysed reaction is L-cysteine + L-glutamate + ATP = gamma-L-glutamyl-L-cysteine + ADP + phosphate + H(+). Its pathway is sulfur metabolism; glutathione biosynthesis; glutathione from L-cysteine and L-glutamate: step 1/2. This Salmonella gallinarum (strain 287/91 / NCTC 13346) protein is Glutamate--cysteine ligase.